We begin with the raw amino-acid sequence, 218 residues long: ATP-dependent dethiobiotin synthetase BioD (218 aa).

10-15 (NAGKTT) is a binding site for ATP. Mg(2+) is bound at residue Thr14. Lys35 is an active-site residue. Position 39 (Thr39) interacts with substrate. The Mg(2+) site is built by His52 and Glu116. ATP is bound by residues 116 to 119 (EGAG) and 176 to 177 (LR).

It belongs to the dethiobiotin synthetase family. Homodimer. Mg(2+) is required as a cofactor.

It is found in the cytoplasm. It carries out the reaction (7R,8S)-7,8-diammoniononanoate + CO2 + ATP = (4R,5S)-dethiobiotin + ADP + phosphate + 3 H(+). Its pathway is cofactor biosynthesis; biotin biosynthesis; biotin from 7,8-diaminononanoate: step 1/2. Catalyzes a mechanistically unusual reaction, the ATP-dependent insertion of CO2 between the N7 and N8 nitrogen atoms of 7,8-diaminopelargonic acid (DAPA, also called 7,8-diammoniononanoate) to form a ureido ring. This chain is ATP-dependent dethiobiotin synthetase BioD, found in Helicobacter pylori (strain Shi470).